The primary structure comprises 197 residues: Chalcone--flavanone isomerase 2 (197 aa).

Thr23, Asn88, and Thr165 together coordinate substrate.

This sequence belongs to the chalcone isomerase family.

It catalyses the reaction a chalcone = a flavanone.. The protein operates within secondary metabolite biosynthesis; flavonoid biosynthesis. In terms of biological role, catalyzes the intramolecular cyclization of bicyclic chalcones into tricyclic (S)-flavanones. Responsible for the isomerization of 4,2',4',6'-tetrahydroxychalcone (also termed chalcone) into naringenin. This Medicago sativa (Alfalfa) protein is Chalcone--flavanone isomerase 2 (CHI2).